Consider the following 193-residue polypeptide: Chlorate reductase assembly chaperone protein (193 aa).

This sequence belongs to the type II DMSO reductase enzyme chaperone family.

The protein localises to the cytoplasm. Its function is as follows. May function as a system-specific chaperone protein essential for the assembly of an active chlorate reductase ClrABC. The protein is Chlorate reductase assembly chaperone protein (clrD) of Ideonella dechloratans.